Here is a 519-residue protein sequence, read N- to C-terminus: Na(+)/H(+) exchange regulatory cofactor NHE-RF3 (519 aa).

3 PDZ domains span residues 9 to 90, 134 to 215, and 243 to 323; these read ECKL…LDGD, RLCY…VDKE, and IVEM…VDKE. Phosphoserine occurs at positions 148, 192, 250, 334, and 348. The disordered stretch occupies residues 347-374; it reads GSVKEAPAPTPTSLEVSSPPDTTEEVDH. Residues 357–367 are compositionally biased toward polar residues; that stretch reads PTSLEVSSPPD. A PDZ 4 domain is found at 378–458; the sequence is LCRLAKGENG…NVTLLVCGKK (81 aa). Phosphothreonine is present on threonine 451. The interval 473-519 is disordered; it reads SLADPPDTPPDSKEGIVVESKHDSHMAKERAHSTASHSSSNSEDTEM. The segment covering 482-504 has biased composition (basic and acidic residues); the sequence is PDSKEGIVVESKHDSHMAKERAH. 6 positions are modified to phosphoserine: serine 492, serine 508, serine 510, serine 511, serine 512, and serine 514. Low complexity predominate over residues 505 to 519; that stretch reads STASHSSSNSEDTEM.

The protein belongs to the NHER family. Interacts with PDZK1IP1 and ABCC2. Binds to the C-terminal region of SLC26A3. Interacts (via PDZ domains 1 and 3) with SCARB1 (C-terminal domain). Forms a heterodimeric complex with NHERF1. Interacts with AKAP2, BCR, CFTR, SLCO1A1, SLC22A12, SLC22A4, SLC22A5, NHERF2 and SLC17A1. Component of a complex, composed of PDZK1, SYNGAP1, KLHL17 and NMDA receptors. Interacts (via PDZ1 domain) directly with KLHL17; the interaction is important for integrity of actin cytoskeleton structures in neurons. Interacts (via C-terminal PDZ domain) with SLC26A6 (via C-terminal domain). Interacts (via C-terminal PDZ domain) with SLC9A3 (via C-terminal domain). Interacts (via the first PDZ domain) with PTGIR (via non-isoprenylated C-terminus). Interacts (via PDZ domains 1 and 3) with SLC5A8 (via PDZ-binding motif); interaction increases nicotinate transport activity of SLC5A8.

The protein resides in the membrane. Its subcellular location is the cell membrane. Functionally, a scaffold protein that connects plasma membrane proteins and regulatory components, regulating their surface expression in epithelial cells apical domains. May be involved in the coordination of a diverse range of regulatory processes for ion transport and second messenger cascades. In complex with NHERF1, may cluster proteins that are functionally dependent in a mutual fashion and modulate the trafficking and the activity of the associated membrane proteins. May play a role in the cellular mechanisms associated with multidrug resistance through its interaction with ABCC2 and PDZK1IP1. May potentiate the CFTR chloride channel activity. Required for normal cell-surface expression of SCARB1. Plays a role in maintaining normal plasma cholesterol levels via its effects on SCARB1. Plays a role in the normal localization and function of the chloride-anion exchanger SLC26A6 to the plasma membrane in the brush border of the proximal tubule of the kidney. May be involved in the regulation of proximal tubular Na(+)-dependent inorganic phosphate cotransport therefore playing an important role in tubule function. The polypeptide is Na(+)/H(+) exchange regulatory cofactor NHE-RF3 (PDZK1) (Pongo abelii (Sumatran orangutan)).